A 252-amino-acid polypeptide reads, in one-letter code: uncharacterized protein (252 aa).

The protein belongs to the GSP E family.

This is an uncharacterized protein from Methanocaldococcus jannaschii (strain ATCC 43067 / DSM 2661 / JAL-1 / JCM 10045 / NBRC 100440) (Methanococcus jannaschii).